Reading from the N-terminus, the 520-residue chain is Ubiquitin carboxyl-terminal hydrolase 3 (520 aa).

Met-1 is modified (N-acetylmethionine). The UBP-type zinc finger occupies 1–121 (MECPHLSSSV…QKVREHLQNL (121 aa)). Zn(2+) is bound by residues Cys-3, His-5, Cys-29, Cys-32, Cys-41, Cys-44, Cys-49, His-56, His-60, His-82, Cys-95, and Cys-98. The USP domain maps to 159 to 511 (TGLRNLGNTC…KAYILFYVEH (353 aa)). Cys-168 (nucleophile) is an active-site residue. The active-site Proton acceptor is the His-471.

It belongs to the peptidase C19 family. USP3 subfamily. In terms of assembly, interacts (via UBP-type domain) with H2A; the interaction is less efficient than with monoubiquitinated H2A. As to expression, expressed in all tissues examined, with strongest expression in pancreas.

The protein resides in the nucleus. It localises to the cytoplasm. It carries out the reaction Thiol-dependent hydrolysis of ester, thioester, amide, peptide and isopeptide bonds formed by the C-terminal Gly of ubiquitin (a 76-residue protein attached to proteins as an intracellular targeting signal).. In terms of biological role, deubiquitinase that plays a role in several cellular processes including transcriptional regulation, cell cycle progression or innate immunity. In response to DNA damage, deubiquitinates monoubiquitinated target proteins such as histone H2A and H2AX and thereby counteracts RNF168- and RNF8-mediated ubiquitination. In turn, participates in the recruitment of DNA damage repair factors to DNA break sites. Required for proper progression through S phase and subsequent mitotic entry. Acts as a positive regulator of TP53 by deubiquitinating and stabilizing it to promote normal cell proliferation and transformation. Participates in establishing tolerance innate immune memory through non-transcriptional feedback. Mechanistically, negatively regulates TLR-induced NF-kappa-B signaling by targeting and removing the 'Lys-63'-linked polyubiquitin chains on MYD88. Negatively regulates the activation of type I interferon signaling by mediating 'Lys-63'-linked polyubiquitin chains on RIGI and IFIH1. Also deubiquinates ASC/PYCARD, the central adapter mediating the assembly and activation of most inflammasomes, and thereby promotes inflammasome activation. This chain is Ubiquitin carboxyl-terminal hydrolase 3 (USP3), found in Homo sapiens (Human).